A 303-amino-acid polypeptide reads, in one-letter code: Protein SULFUR DEFICIENCY-INDUCED 2 (303 aa).

Positions 62–89 (RVDSALKDMALLMKQQNRAEEAIDAIQS) form a coiled coil. TPR repeat units lie at residues 64–97 (DSALKDMALLMKQQNRAEEAIDAIQSFRDLCSRQ), 100–133 (ESLDNVLIDLYKKCGRIEEQVELLKQKLWMIYQG), 160–193 (SRILGNLGWAYMQLMDYTAAEAVYRKAQLIEPDA), and 195–226 (KACNLCTCLIKQGKHDEARSILFRDVLMENKE). The stretch at 232–253 (RLMARVQELLSELKPQEEEAAA) forms a coiled coil.

Belongs to the MS5 protein family.

The protein localises to the nucleus. Functionally, involved in the utilization of stored sulfate under sulfur-deficient conditions. The polypeptide is Protein SULFUR DEFICIENCY-INDUCED 2 (Arabidopsis thaliana (Mouse-ear cress)).